We begin with the raw amino-acid sequence, 195 residues long: Interferon tau-1 (195 aa).

The signal sequence occupies residues 1–23 (MAFVLSLLMALVLVSYGPGRSLG). Cystine bridges form between Cys24–Cys122 and Cys52–Cys162. Asn101 carries an N-linked (GlcNAc...) asparagine glycan.

This sequence belongs to the alpha/beta interferon family. IFN-alphaII subfamily. As to expression, constitutively and exclusively expressed in the mononuclear cells of the extraembryonic trophectoderm.

The protein localises to the secreted. Paracrine hormone primarily responsible for maternal recognition of pregnancy. Interacts with endometrial receptors, probably type I interferon receptors, and blocks estrogen receptor expression, preventing the estrogen-induced increase in oxytocin receptor expression in the endometrium. This results in the suppression of the pulsatile endometrial release of the luteolytic hormone prostaglandin F2-alpha, hindering the regression of the corpus luteum (luteolysis) and therefore a return to ovarian cyclicity. This, and a possible direct effect of IFN-tau on prostaglandin synthesis, leads in turn to continued ovarian progesterone secretion, which stimulates the secretion by the endometrium of the nutrients required for the growth of the conceptus. In summary, displays particularly high antiviral and antiproliferative potency concurrently with particular weak cytotoxicity, high antiluteolytic activity and immunomodulatory properties. In contrast with other IFNs, IFN-tau is not virally inducible. The chain is Interferon tau-1 (IFNT1) from Bos taurus (Bovine).